Consider the following 302-residue polypeptide: Putative S-adenosyl-L-methionine-dependent methyltransferase MAP_1622c (302 aa).

Residues Asp129 and Asp158 to Leu159 each bind S-adenosyl-L-methionine.

This sequence belongs to the UPF0677 family.

Its function is as follows. Exhibits S-adenosyl-L-methionine-dependent methyltransferase activity. The protein is Putative S-adenosyl-L-methionine-dependent methyltransferase MAP_1622c of Mycolicibacterium paratuberculosis (strain ATCC BAA-968 / K-10) (Mycobacterium paratuberculosis).